A 303-amino-acid chain; its full sequence is Bifunctional protein FolD (303 aa).

NADP(+) contacts are provided by residues 175–177 (GVS) and isoleucine 243.

This sequence belongs to the tetrahydrofolate dehydrogenase/cyclohydrolase family. As to quaternary structure, homodimer.

The enzyme catalyses (6R)-5,10-methylene-5,6,7,8-tetrahydrofolate + NADP(+) = (6R)-5,10-methenyltetrahydrofolate + NADPH. It carries out the reaction (6R)-5,10-methenyltetrahydrofolate + H2O = (6R)-10-formyltetrahydrofolate + H(+). It functions in the pathway one-carbon metabolism; tetrahydrofolate interconversion. In terms of biological role, catalyzes the oxidation of 5,10-methylenetetrahydrofolate to 5,10-methenyltetrahydrofolate and then the hydrolysis of 5,10-methenyltetrahydrofolate to 10-formyltetrahydrofolate. The protein is Bifunctional protein FolD of Xanthomonas axonopodis pv. citri (strain 306).